The sequence spans 420 residues: Serine hydroxymethyltransferase (420 aa).

(6S)-5,6,7,8-tetrahydrofolate-binding positions include Leu121 and Gly125–Leu127. Lys230 carries the post-translational modification N6-(pyridoxal phosphate)lysine. Ser355–Phe357 contributes to the (6S)-5,6,7,8-tetrahydrofolate binding site.

This sequence belongs to the SHMT family. Homodimer. Pyridoxal 5'-phosphate is required as a cofactor.

It is found in the cytoplasm. It catalyses the reaction (6R)-5,10-methylene-5,6,7,8-tetrahydrofolate + glycine + H2O = (6S)-5,6,7,8-tetrahydrofolate + L-serine. It functions in the pathway one-carbon metabolism; tetrahydrofolate interconversion. The protein operates within amino-acid biosynthesis; glycine biosynthesis; glycine from L-serine: step 1/1. Catalyzes the reversible interconversion of serine and glycine with tetrahydrofolate (THF) serving as the one-carbon carrier. This reaction serves as the major source of one-carbon groups required for the biosynthesis of purines, thymidylate, methionine, and other important biomolecules. Also exhibits THF-independent aldolase activity toward beta-hydroxyamino acids, producing glycine and aldehydes, via a retro-aldol mechanism. In Streptococcus mutans serotype c (strain ATCC 700610 / UA159), this protein is Serine hydroxymethyltransferase.